A 233-amino-acid polypeptide reads, in one-letter code: Phosphoribosylformylglycinamidine synthase subunit PurQ (233 aa).

The region spanning 3-233 (AAILVFPGIN…GLAQHLEKAA (231 aa)) is the Glutamine amidotransferase type-1 domain. Cysteine 87 (nucleophile) is an active-site residue. Catalysis depends on residues histidine 204 and glutamate 206.

Part of the FGAM synthase complex composed of 1 PurL, 1 PurQ and 2 PurS subunits.

The protein resides in the cytoplasm. It catalyses the reaction N(2)-formyl-N(1)-(5-phospho-beta-D-ribosyl)glycinamide + L-glutamine + ATP + H2O = 2-formamido-N(1)-(5-O-phospho-beta-D-ribosyl)acetamidine + L-glutamate + ADP + phosphate + H(+). It carries out the reaction L-glutamine + H2O = L-glutamate + NH4(+). The protein operates within purine metabolism; IMP biosynthesis via de novo pathway; 5-amino-1-(5-phospho-D-ribosyl)imidazole from N(2)-formyl-N(1)-(5-phospho-D-ribosyl)glycinamide: step 1/2. In terms of biological role, part of the phosphoribosylformylglycinamidine synthase complex involved in the purines biosynthetic pathway. Catalyzes the ATP-dependent conversion of formylglycinamide ribonucleotide (FGAR) and glutamine to yield formylglycinamidine ribonucleotide (FGAM) and glutamate. The FGAM synthase complex is composed of three subunits. PurQ produces an ammonia molecule by converting glutamine to glutamate. PurL transfers the ammonia molecule to FGAR to form FGAM in an ATP-dependent manner. PurS interacts with PurQ and PurL and is thought to assist in the transfer of the ammonia molecule from PurQ to PurL. The chain is Phosphoribosylformylglycinamidine synthase subunit PurQ from Bradyrhizobium diazoefficiens (strain JCM 10833 / BCRC 13528 / IAM 13628 / NBRC 14792 / USDA 110).